The following is a 288-amino-acid chain: Beta-lactamase PSE-4 (288 aa).

The N-terminal stretch at 1-17 is a signal peptide; the sequence is MKFLLAFSLLIPSVVFA. S65 serves as the catalytic Acyl-ester intermediate. A disulfide bridge connects residues C72 and C118. A substrate-binding site is contributed by 229-231; sequence RSG.

It belongs to the class-A beta-lactamase family.

It carries out the reaction a beta-lactam + H2O = a substituted beta-amino acid. Its function is as follows. Hydrolyzes both carbenicillin and oxacillin. The polypeptide is Beta-lactamase PSE-4 (pse4) (Pseudomonas aeruginosa).